The primary structure comprises 690 residues: MAKKKSEEHSGADANDSDYQEEPNFEDPPGFVDNISDEDLLGDMLAQRPSEADGVESVVVVDNIPKVEPERLDKLKLVINKLFSNYGDIVNVVYPVDEDGKTKGYAFMEYKQASQAEEAVKKLNNHRLDKNHTFAVNLFTDFQKYENIPEKWEPPTVQTFKVQSDLYNFINDPDTYDQYCVAAETAPNCVQVGFWQNVLPEPFELETRERFTDTFVKWSPLGTYVVTFHKPGVAIWGGSSFQKIQKFPHPGTQFVEFSPCENYLVTYGPTPTGQKIIIWDIRTGAEKRSFVADGMSVLSMFRWSHDDKFVARMGENSIHIYETPSFFLLDLKSIKIPGIRGFSWSPTDNVIAYWVEEQNQIPARVTLMEIPKKREIRNKNLFHVADCKLHWQKSGDYLCVKVDRYSKLKKDKKDLDVKFLGMFYNFEIFHMREKEIPVDSVEIRELILAFAWEPIGNKFSIIHGEQNSSNVSFYEVNKGVKPSLVKRLEKKSCTHLFWSPRGQFIVMANLTMGTFEFVDSTNDYIISASPDHFRASEVEWDPTGRYVVTGVSSWKVKEDTGFNMYTFQGRIIKRTILKNFVQFLWRPRPPTLLGEEKQKEIKKNLKKYYAAFEQKDRLRLTRASKELLEKRSQLRETFMEYRNKRIAEWADQKSRRIMLRGHVDTDNLETDEVDEEIVEFLVKEEVTLLE.

Basic and acidic residues predominate over residues Met-1–Gly-11. A disordered region spans residues Met-1–Ser-36. Residues Asn-15 to Phe-25 are compositionally biased toward acidic residues. Residues Ser-57 to Asp-141 enclose the RRM domain. WD repeat units follow at residues Thr-207 to Lys-246, Asp-293 to Leu-331, Ile-334 to Glu-369, Glu-442 to Leu-484, and Pro-530 to Thr-575. Residues Glu-595 to Arg-645 are a coiled coil.

It belongs to the eIF-3 subunit B family. Component of the eukaryotic translation initiation factor 3 (eIF-3) complex. The eIF-3 complex interacts with pix. Interacts with mxt.

Its subcellular location is the cytoplasm. Its function is as follows. RNA-binding component of the eukaryotic translation initiation factor 3 (eIF-3) complex, which is involved in protein synthesis of a specialized repertoire of mRNAs and, together with other initiation factors, stimulates binding of mRNA and methionyl-tRNAi to the 40S ribosome. The eIF-3 complex specifically targets and initiates translation of a subset of mRNAs involved in cell proliferation. The chain is Eukaryotic translation initiation factor 3 subunit B from Drosophila erecta (Fruit fly).